The following is a 141-amino-acid chain: uncharacterized protein (141 aa).

The protein belongs to the mimivirus L163/R849 family.

This is an uncharacterized protein from Acanthamoeba polyphaga mimivirus (APMV).